The following is an 85-amino-acid chain: MVERALRKTRVGKVVSNKMDKTIVVAIETSVKHPLYGKIVKRTYKLKAHDEENQCQIGDKVKVMETRPLSKEKRWRLVQIVEKAQ.

It belongs to the universal ribosomal protein uS17 family. Part of the 30S ribosomal subunit.

One of the primary rRNA binding proteins, it binds specifically to the 5'-end of 16S ribosomal RNA. In Ruminiclostridium cellulolyticum (strain ATCC 35319 / DSM 5812 / JCM 6584 / H10) (Clostridium cellulolyticum), this protein is Small ribosomal subunit protein uS17.